Here is a 168-residue protein sequence, read N- to C-terminus: Putative apoptosis regulator A9 (168 aa).

Residues 143–162 (SAFYFLTAAASCLTLLLLYF) traverse the membrane as a helical segment.

It is found in the host membrane. In terms of biological role, suppresses apoptosis in host cell and thus facilitates production of progeny virions. The sequence is that of Putative apoptosis regulator A9 (A9) from Alcelaphine herpesvirus 1 (strain C500) (AlHV-1).